Here is a 510-residue protein sequence, read N- to C-terminus: Serine carboxypeptidase 1 (510 aa).

Positions 1–25 (MARRGRRSLASPAVAIALFVFLAYG) are cleaved as a signal peptide. Positions 26-36 (GGGGGGGVCEA) are excised as a propeptide. 3 disulfide bridges follow: Cys-98–Cys-399, Cys-262–Cys-274, and Cys-297–Cys-366. Residue Asn-154 is glycosylated (N-linked (GlcNAc...) asparagine). Ser-194 is a catalytic residue. N-linked (GlcNAc...) asparagine glycosylation occurs at Asn-268. Positions 303–362 (IKKVTPANTKLPKSFQHLGTTTKPLAVRTRMHGRAWPLRAPVRAGRVPSWQEFARGSRPS) are cleaved as a propeptide — linker peptide. N-linked (GlcNAc...) asparagine glycosylation is present at Asn-418. Active-site residues include Asp-434 and His-487. The Microbody targeting signal signature appears at 508-510 (SKL).

It belongs to the peptidase S10 family.

The catalysed reaction is Release of a C-terminal amino acid with broad specificity.. In Oryza sativa subsp. japonica (Rice), this protein is Serine carboxypeptidase 1 (CBP1).